Reading from the N-terminus, the 443-residue chain is F-box only protein 39 (443 aa).

Positions 13–59 constitute an F-box domain; sequence QSCWATLPDVCLRRVFWWLGDRDRSRAALVCRKWNQIMYSADLWRYR.

As to quaternary structure, directly interacts with SKP1 and CUL1.

In terms of biological role, substrate-recognition component of the SCF (SKP1-CUL1-F-box protein)-type E3 ubiquitin ligase complex. This Rattus norvegicus (Rat) protein is F-box only protein 39 (Fbxo39).